Reading from the N-terminus, the 230-residue chain is Ribonuclease 3 (230 aa).

An RNase III domain is found at 5–125 (YSRFYNILGY…VIGAIYLDSD (121 aa)). Glutamate 40 provides a ligand contact to Mg(2+). Residue aspartate 44 is part of the active site. The Mg(2+) site is built by aspartate 111 and glutamate 114. Glutamate 114 is a catalytic residue. A DRBM domain is found at 153-223 (DSKSKLQEIL…AEKMIEMLSQ (71 aa)).

Belongs to the ribonuclease III family. As to quaternary structure, homodimer. The cofactor is Mg(2+).

It is found in the cytoplasm. The enzyme catalyses Endonucleolytic cleavage to 5'-phosphomonoester.. Functionally, digests double-stranded RNA. Involved in the processing of primary rRNA transcript to yield the immediate precursors to the large and small rRNAs (23S and 16S). Processes some mRNAs, and tRNAs when they are encoded in the rRNA operon. Processes pre-crRNA and tracrRNA of type II CRISPR loci if present in the organism. This Francisella tularensis subsp. holarctica (strain FTNF002-00 / FTA) protein is Ribonuclease 3.